The following is a 225-amino-acid chain: Adenosylcobinamide-GDP ribazoletransferase (225 aa).

The next 5 membrane-spanning stretches (helical) occupy residues F34–L54, N93–F113, V116–L136, P165–I185, and V204–A224.

This sequence belongs to the CobS family. Mg(2+) serves as cofactor.

Its subcellular location is the cell membrane. It catalyses the reaction alpha-ribazole + adenosylcob(III)inamide-GDP = adenosylcob(III)alamin + GMP + H(+). The enzyme catalyses alpha-ribazole 5'-phosphate + adenosylcob(III)inamide-GDP = adenosylcob(III)alamin 5'-phosphate + GMP + H(+). Its pathway is cofactor biosynthesis; adenosylcobalamin biosynthesis; adenosylcobalamin from cob(II)yrinate a,c-diamide: step 7/7. Its function is as follows. Joins adenosylcobinamide-GDP and alpha-ribazole to generate adenosylcobalamin (Ado-cobalamin). Also synthesizes adenosylcobalamin 5'-phosphate from adenosylcobinamide-GDP and alpha-ribazole 5'-phosphate. This is Adenosylcobinamide-GDP ribazoletransferase (cobS1) from Archaeoglobus fulgidus (strain ATCC 49558 / DSM 4304 / JCM 9628 / NBRC 100126 / VC-16).